The chain runs to 307 residues: tRNA pseudouridine synthase B (307 aa).

D38 (nucleophile) is an active-site residue.

Belongs to the pseudouridine synthase TruB family. Type 1 subfamily.

It catalyses the reaction uridine(55) in tRNA = pseudouridine(55) in tRNA. Its function is as follows. Responsible for synthesis of pseudouridine from uracil-55 in the psi GC loop of transfer RNAs. This Bacillus cereus (strain ATCC 14579 / DSM 31 / CCUG 7414 / JCM 2152 / NBRC 15305 / NCIMB 9373 / NCTC 2599 / NRRL B-3711) protein is tRNA pseudouridine synthase B.